We begin with the raw amino-acid sequence, 355 residues long: Cell surface glycoprotein CD200 receptor 1 (355 aa).

The N-terminal stretch at 1 to 26 is a signal peptide; sequence MPCTWITSDLQLRLILTLFFVAECLS. The Extracellular portion of the chain corresponds to 27-267; that stretch reads AGMEGTKTSN…QGAEIPAHLK (241 aa). Residues 35 to 55 are compositionally biased toward polar residues; that stretch reads SNNSMQQLDNGNHSSVSTTSS. Residues 35–56 form a disordered region; it reads SNNSMQQLDNGNHSSVSTTSST. N-linked (GlcNAc...) asparagine glycans are attached at residues asparagine 46, asparagine 123, and asparagine 153. 4 cysteine pairs are disulfide-bonded: cysteine 85–cysteine 156, cysteine 108–cysteine 124, cysteine 191–cysteine 241, and cysteine 210–cysteine 229. The Ig-like C2-type domain maps to 139 to 257; sequence PALQVDPVAI…GNKSLSIQLS (119 aa). The helical transmembrane segment at 268-288 threads the bilayer; that stretch reads NLYITAPIFIILIVVGSIWLL. At 289-355 the chain is on the cytoplasmic side; sequence KISGCRKCKL…NLHTIYVPRV (67 aa).

This sequence belongs to the CD200R family. CD200 and CD200R1 interact via their respective N-terminal Ig-like domains.

The protein localises to the cell membrane. Its function is as follows. Inhibitory receptor for the CD200/OX2 cell surface glycoprotein. Limits inflammation by inhibiting the expression of pro-inflammatory molecules including TNF-alpha, interferons, and inducible nitric oxide synthase (iNOS) in response to selected stimuli. The chain is Cell surface glycoprotein CD200 receptor 1 (CD200R1) from Bos taurus (Bovine).